The sequence spans 892 residues: DNA mismatch repair protein MutS (892 aa).

Residue 607–614 (GPNMSGKS) coordinates ATP. The tract at residues 833 to 855 (EESQLSFFGAEQSSKKQDKPALD) is disordered. A compositionally biased stretch (basic and acidic residues) spans 845-855 (SSKKQDKPALD).

It belongs to the DNA mismatch repair MutS family.

Functionally, this protein is involved in the repair of mismatches in DNA. It is possible that it carries out the mismatch recognition step. This protein has a weak ATPase activity. In Bacillus anthracis (strain A0248), this protein is DNA mismatch repair protein MutS.